The chain runs to 154 residues: Ribonuclease H (154 aa).

The RNase H type-1 domain maps to 1–142 (MLKQVEIFTD…CDELARRAAG (142 aa)). Mg(2+)-binding residues include Asp10, Glu48, Asp70, and Asp134.

The protein belongs to the RNase H family. As to quaternary structure, monomer. Mg(2+) serves as cofactor.

The protein localises to the cytoplasm. It catalyses the reaction Endonucleolytic cleavage to 5'-phosphomonoester.. In terms of biological role, endonuclease that specifically degrades the RNA of RNA-DNA hybrids. The sequence is that of Ribonuclease H from Edwardsiella ictaluri (strain 93-146).